An 807-amino-acid polypeptide reads, in one-letter code: Glycerol-3-phosphate acyltransferase (807 aa).

Residues 308–313 (CHRSHM) carry the HXXXXD motif motif.

The protein belongs to the GPAT/DAPAT family.

The protein resides in the cell inner membrane. The enzyme catalyses sn-glycerol 3-phosphate + an acyl-CoA = a 1-acyl-sn-glycero-3-phosphate + CoA. The protein operates within phospholipid metabolism; CDP-diacylglycerol biosynthesis; CDP-diacylglycerol from sn-glycerol 3-phosphate: step 1/3. This is Glycerol-3-phosphate acyltransferase from Shewanella amazonensis (strain ATCC BAA-1098 / SB2B).